Reading from the N-terminus, the 431-residue chain is D-inositol 3-phosphate glycosyltransferase (431 aa).

Residue histidine 14 coordinates 1D-myo-inositol 3-phosphate. UDP-N-acetyl-alpha-D-glucosamine-binding positions include 20–21 (QP) and glycine 28. Residues 25–30 (DAGGMN), lysine 83, tyrosine 116, threonine 140, and arginine 160 contribute to the 1D-myo-inositol 3-phosphate site. Positions 240 and 245 each coordinate UDP-N-acetyl-alpha-D-glucosamine. Mg(2+) is bound by residues tyrosine 315, arginine 316, and alanine 318. The UDP-N-acetyl-alpha-D-glucosamine site is built by glutamate 328 and glutamate 336. Threonine 342 contacts Mg(2+).

It belongs to the glycosyltransferase group 1 family. MshA subfamily. Homodimer.

It catalyses the reaction 1D-myo-inositol 3-phosphate + UDP-N-acetyl-alpha-D-glucosamine = 1D-myo-inositol 2-acetamido-2-deoxy-alpha-D-glucopyranoside 3-phosphate + UDP + H(+). Functionally, catalyzes the transfer of a N-acetyl-glucosamine moiety to 1D-myo-inositol 3-phosphate to produce 1D-myo-inositol 2-acetamido-2-deoxy-glucopyranoside 3-phosphate in the mycothiol biosynthesis pathway. This chain is D-inositol 3-phosphate glycosyltransferase, found in Thermomonospora curvata (strain ATCC 19995 / DSM 43183 / JCM 3096 / KCTC 9072 / NBRC 15933 / NCIMB 10081 / Henssen B9).